The chain runs to 418 residues: tRNA-2-methylthio-N(6)-dimethylallyladenosine synthase (418 aa).

The 118-residue stretch at 1-118 folds into the MTTase N-terminal domain; the sequence is MNYLIETIGC…ALKIMNLFRT (118 aa). [4Fe-4S] cluster contacts are provided by cysteine 10, cysteine 46, cysteine 80, cysteine 143, cysteine 147, and cysteine 150. The region spanning 129–356 is the Radical SAM core domain; sequence IKSKIVRYIT…LKESNKISIE (228 aa). In terms of domain architecture, TRAM spans 359 to 418; the sequence is SEMLGSTQQVLAEEIKNGIIKARTKNGRKVFAEGRKEYIGKHINVNIKEAKINSLFGDIV.

Belongs to the methylthiotransferase family. MiaB subfamily. As to quaternary structure, monomer. It depends on [4Fe-4S] cluster as a cofactor.

It is found in the cytoplasm. It catalyses the reaction N(6)-dimethylallyladenosine(37) in tRNA + (sulfur carrier)-SH + AH2 + 2 S-adenosyl-L-methionine = 2-methylsulfanyl-N(6)-dimethylallyladenosine(37) in tRNA + (sulfur carrier)-H + 5'-deoxyadenosine + L-methionine + A + S-adenosyl-L-homocysteine + 2 H(+). Its function is as follows. Catalyzes the methylthiolation of N6-(dimethylallyl)adenosine (i(6)A), leading to the formation of 2-methylthio-N6-(dimethylallyl)adenosine (ms(2)i(6)A) at position 37 in tRNAs that read codons beginning with uridine. The polypeptide is tRNA-2-methylthio-N(6)-dimethylallyladenosine synthase (Endomicrobium trichonymphae).